Consider the following 80-residue polypeptide: Large ribosomal subunit protein uL29 (80 aa).

It belongs to the universal ribosomal protein uL29 family.

The polypeptide is Large ribosomal subunit protein uL29 (Mycobacterium marinum (strain ATCC BAA-535 / M)).